The chain runs to 1137 residues: Voltage-dependent calcium channel subunit alpha-2/delta-4 (1137 aa).

The N-terminal stretch at 1-19 (MVCGCSALLPLPNPRPTMP) is a signal peptide. Residues 20-1115 (ATPNFLANPS…AQDCGGASDT (1096 aa)) are Extracellular-facing. Asparagine 201 carries an N-linked (GlcNAc...) asparagine glycan. The VWFA domain maps to 291–473 (DIVILVDVSG…ENVMEYLHVL (183 aa)). A divalent metal cation is bound by residues aspartate 297, serine 299, and serine 301. The MIDAS-like motif signature appears at 297–301 (DVSGS). Cysteines 447 and 1097 form a disulfide. The Cache domain occupies 487 to 580 (WTEAYMDSKL…RPLYREGKKL (94 aa)). The N-linked (GlcNAc...) asparagine glycan is linked to asparagine 664. A helical membrane pass occupies residues 1116–1136 (SASPPLLLLPVCAWGLLPQLL). Position 1137 (arginine 1137) is a topological domain, cytoplasmic.

It belongs to the calcium channel subunit alpha-2/delta family. In terms of assembly, dimer formed of alpha-2-2 and delta-2 chains; disulfide-linked. Voltage-dependent calcium channels are multisubunit complexes, consisting of alpha-1 (CACNA1), alpha-2 (CACNA2D), beta (CACNB) and delta (CACNA2D) subunits in a 1:1:1:1 ratio. Interacts with CACNA1C and CACNB3. Post-translationally, may be proteolytically processed into subunits alpha-2-4 and delta-4 that are disulfide-linked. It is however unclear whether such cleavage really takes place in vivo and has a functional role. As to expression, predominantly expressed in certain types of endocrine cells. Present in the Paneth cells of the small intestine. Also present in the erythroblasts in the fetal liver, in the cells of the zona reticularis of the adrenal gland and in the basophils of the pituitary. Present at low level in some brain regions such as the cerebellum (at protein level).

It is found in the membrane. The alpha-2/delta subunit of voltage-dependent calcium channels regulates calcium current density and activation/inactivation kinetics of the calcium channel. The sequence is that of Voltage-dependent calcium channel subunit alpha-2/delta-4 (CACNA2D4) from Homo sapiens (Human).